The primary structure comprises 94 residues: Neutrophil defensin 3 (94 aa).

An N-terminal signal peptide occupies residues 1–19 (MRTLAILAAILLVALQAQA). Residues 20–38 (EPLQARADEVAAAPEQIAA) constitute a propeptide that is removed on maturation. Cystine bridges form between C66–C94, C68–C83, and C73–C93.

It belongs to the alpha-defensin family. In terms of assembly, dimer. As to quaternary structure, (Microbial infection) Interacts with herpes virus 1 HHV-1 envelope glycoprotein B; this interaction inhibits viral infection.

The protein localises to the secreted. Effector molecule of the innate immune system that acts via antibiotic-like properties against a broad array of infectious agents including bacteria, fungi, and viruses. Possesses the ability to neutralize bacterial toxins such as B.anthracis lethal factor, Clostridium difficile cytotoxin B as well as leukocidin produced by Staphylococcus aureus. Also blocks herpes simplex virus infection by interacting with envelope glycoprotein B and thus preventing its binding to heparan sulfate, the receptor for attachment. This Homo sapiens (Human) protein is Neutrophil defensin 3 (DEFA3).